The following is a 229-amino-acid chain: Auxin-responsive protein IAA17 (229 aa).

Residues 14-18 (LCLGL) carry the EAR-like (transcriptional repression) motif. A PB1 domain is found at 110-211 (AAFVKVSMDG…TCKRLRLMKG (102 aa)).

Belongs to the Aux/IAA family. In terms of assembly, homodimers and heterodimers. Interacts with the auxin response factors ARF1 and IAA24. Interacts with IAA1. Interacts with TPL. Interacts (via PB1 domain) with ARF7 (via PB1 domain). Phosphorylated by phytochrome A in vitro.

The protein resides in the nucleus. Its function is as follows. Aux/IAA proteins are short-lived transcriptional factors that function as repressors of early auxin response genes at low auxin concentrations. Repression is thought to result from the interaction with auxin response factors (ARFs), proteins that bind to the auxin-responsive promoter element (AuxRE). Formation of heterodimers with ARF proteins may alter their ability to modulate early auxin response genes expression. This is Auxin-responsive protein IAA17 (IAA17) from Arabidopsis thaliana (Mouse-ear cress).